The chain runs to 319 residues: ATP-dependent 6-phosphofructokinase (319 aa).

Residue glycine 11 coordinates ATP. Residue 21–25 (RAVVR) coordinates ADP. ATP is bound by residues 72 to 73 (RC) and 102 to 105 (GDGS). Position 103 (aspartate 103) interacts with Mg(2+). 125–127 (TID) is a binding site for substrate. The active-site Proton acceptor is aspartate 127. Position 154 (arginine 154) interacts with ADP. Substrate is bound by residues arginine 162 and 169 to 171 (MGR). Residues 185–187 (GAE), arginine 211, and 213–215 (KKH) contribute to the ADP site. Residues glutamate 222, arginine 243, and 249–252 (HIQR) each bind substrate.

This sequence belongs to the phosphofructokinase type A (PFKA) family. ATP-dependent PFK group I subfamily. Prokaryotic clade 'B1' sub-subfamily. In terms of assembly, homotetramer. It depends on Mg(2+) as a cofactor.

Its subcellular location is the cytoplasm. The enzyme catalyses beta-D-fructose 6-phosphate + ATP = beta-D-fructose 1,6-bisphosphate + ADP + H(+). Its pathway is carbohydrate degradation; glycolysis; D-glyceraldehyde 3-phosphate and glycerone phosphate from D-glucose: step 3/4. With respect to regulation, allosterically activated by ADP and other diphosphonucleosides, and allosterically inhibited by phosphoenolpyruvate. Its function is as follows. Catalyzes the phosphorylation of D-fructose 6-phosphate to fructose 1,6-bisphosphate by ATP, the first committing step of glycolysis. The sequence is that of ATP-dependent 6-phosphofructokinase from Bacillus licheniformis (strain ATCC 14580 / DSM 13 / JCM 2505 / CCUG 7422 / NBRC 12200 / NCIMB 9375 / NCTC 10341 / NRRL NRS-1264 / Gibson 46).